The primary structure comprises 124 residues: V-type proton ATPase subunit F 1 (124 aa).

Serine 87 carries the phosphoserine modification.

This sequence belongs to the V-ATPase F subunit family. V-ATPase is a heteromultimeric enzyme made up of two complexes: the ATP-hydrolytic V1 complex and the proton translocation V0 complex. The V1 complex consists of three catalytic AB heterodimers that form a heterohexamer, three peripheral stalks each consisting of EG heterodimers, one central rotor including subunits D and F, and the regulatory subunits C and H. The proton translocation complex V0 consists of the proton transport subunit a, a ring of proteolipid subunits c9c'', rotary subunit d, subunits e and f, and the accessory subunits VhaAC45 and ATP6AP2.

Its function is as follows. Subunit of the V1 complex of vacuolar(H+)-ATPase (V-ATPase), a multisubunit enzyme composed of a peripheral complex (V1) that hydrolyzes ATP and a membrane integral complex (V0) that translocates protons. V-ATPase is responsible for acidifying and maintaining the pH of intracellular compartments and in some cell types, is targeted to the plasma membrane, where it is responsible for acidifying the extracellular environment. The sequence is that of V-type proton ATPase subunit F 1 (Vha14-1) from Drosophila melanogaster (Fruit fly).